Reading from the N-terminus, the 120-residue chain is Prefoldin subunit beta (120 aa).

This sequence belongs to the prefoldin subunit beta family. Heterohexamer of two alpha and four beta subunits.

It is found in the cytoplasm. In terms of biological role, molecular chaperone capable of stabilizing a range of proteins. Seems to fulfill an ATP-independent, HSP70-like function in archaeal de novo protein folding. The protein is Prefoldin subunit beta of Methanothrix thermoacetophila (strain DSM 6194 / JCM 14653 / NBRC 101360 / PT) (Methanosaeta thermophila).